Reading from the N-terminus, the 202-residue chain is MSALETQNLGMVPVVIEQSGRGERAYDIYSRLLRERVIFLVGPVNDQTANLVVAQLLFLESENPDKDISLYINSPGGSVSAGLSIFDTMQFIKPDVSTLCMGIAASMGAFLLAAGAKGKRFALPNSRVMIHQPSGGAQGQATDIEIQAREILKLRESLNGILAERTGQPLEKIRADSERDYFMSAEEATGYGLIDKVIAQRA.

S106 serves as the catalytic Nucleophile. Residue H131 is part of the active site.

This sequence belongs to the peptidase S14 family. In terms of assembly, fourteen ClpP subunits assemble into 2 heptameric rings which stack back to back to give a disk-like structure with a central cavity, resembling the structure of eukaryotic proteasomes.

Its subcellular location is the cytoplasm. It carries out the reaction Hydrolysis of proteins to small peptides in the presence of ATP and magnesium. alpha-casein is the usual test substrate. In the absence of ATP, only oligopeptides shorter than five residues are hydrolyzed (such as succinyl-Leu-Tyr-|-NHMec, and Leu-Tyr-Leu-|-Tyr-Trp, in which cleavage of the -Tyr-|-Leu- and -Tyr-|-Trp bonds also occurs).. Cleaves peptides in various proteins in a process that requires ATP hydrolysis. Has a chymotrypsin-like activity. Plays a major role in the degradation of misfolded proteins. The protein is ATP-dependent Clp protease proteolytic subunit of Methylibium petroleiphilum (strain ATCC BAA-1232 / LMG 22953 / PM1).